Here is a 377-residue protein sequence, read N- to C-terminus: Adaptive-response sensory kinase SasA (377 aa).

One can recognise a Histidine kinase domain in the interval 154-373; it reads MLVHDLRSPL…SFHFTLPVYR (220 aa). H157 is subject to Phosphohistidine; by autocatalysis.

In terms of assembly, homooligomerizes. Interacts with KaiC. Participates in the KaiABC clock complex, whose core is composed of a KaiC homohexamer, 6 KaiB and up to 6 KaiA dimers. SasA and KaiB(fs) compete to bind to KaiC.

It carries out the reaction ATP + protein L-histidine = ADP + protein N-phospho-L-histidine.. Its function is as follows. Member of the two-component regulatory system SasA/RpaA involved in genome-wide circadian gene expression. One of several clock output pathways. Participates in the Kai clock protein complex, the main circadian regulator in cyanobacteria, via its interaction with KaiC. KaiC enhances the autophosphorylation activity of SasA, which then transfers its phosphate group to RpaA to activate it. In addition to its output function, recruits fold-shifted KaiB (KaiB(fs)) to KaiC to cooperatively form the KaiB(6):KaiC(6) complex (independent of SasA kinase activity). Required for robustness of the circadian rhythm of gene expression and is involved in clock output, also required for adaptation to light/dark cycles. The chain is Adaptive-response sensory kinase SasA from Synechococcus sp. (strain JA-2-3B'a(2-13)) (Cyanobacteria bacterium Yellowstone B-Prime).